Here is a 41-residue protein sequence, read N- to C-terminus: Large ribosomal subunit protein bL36 (41 aa).

It belongs to the bacterial ribosomal protein bL36 family.

The protein is Large ribosomal subunit protein bL36 of Bradyrhizobium diazoefficiens (strain JCM 10833 / BCRC 13528 / IAM 13628 / NBRC 14792 / USDA 110).